Here is a 166-residue protein sequence, read N- to C-terminus: Ribosome maturation factor RimP (166 aa).

The protein belongs to the RimP family.

The protein localises to the cytoplasm. In terms of biological role, required for maturation of 30S ribosomal subunits. The sequence is that of Ribosome maturation factor RimP from Rickettsia akari (strain Hartford).